The following is a 629-amino-acid chain: uncharacterized protein (629 aa).

The ABC transporter 1 domain maps to Leu4–Glu255. Gly36–Ser43 contacts ATP. Residues Lys284–Ser304 form a disordered region. Residues Ala285–Lys294 are compositionally biased toward basic and acidic residues. Over residues Glu295 to Ser304 the composition is skewed to polar residues. An ABC transporter 2 domain is found at Ile319 to Pro537. Residue Gly351–Thr358 participates in ATP binding. A disordered region spans residues Ser530–Lys555. The segment covering Ala540–Pro550 has biased composition (basic and acidic residues). Positions Lys560–Ser629 form a coiled coil.

It belongs to the ABC transporter superfamily.

This is an uncharacterized protein from Bacillus subtilis (strain 168).